Consider the following 347-residue polypeptide: Probable G-protein coupled receptor 148 (347 aa).

At 1 to 51 (MGDELAPCPVGTTAWPALIQLISKTPCMPQAASNTSLGLGDLRVPSSMLYW) the chain is on the extracellular side. The N-linked (GlcNAc...) asparagine glycan is linked to Asn34. The helical transmembrane segment at 52–72 (LFLPSSLLAAATLAVSPLLLV) threads the bilayer. Residues 73–85 (TILRNQRLRQEPH) are Cytoplasmic-facing. Residues 86 to 106 (YLLPANILLSDLAYILLHMLI) form a helical membrane-spanning segment. Residues 107–130 (SSSSLGGWELGRMACGILTDAVFA) lie on the Extracellular side of the membrane. The helical transmembrane segment at 131-151 (ACTSTILSFTAIVLHTYLAVI) threads the bilayer. Residues 152 to 165 (HPLRYLSFMSHGAA) are Cytoplasmic-facing. A helical membrane pass occupies residues 166–186 (WKAVALIWLVACCFPTFLIWL). The Extracellular portion of the chain corresponds to 187–214 (SKWQDAQLEEQGASYILPPSMGTQPGCG). Residues 215–235 (LLVIVTYTSILCVLFLCTALI) traverse the membrane as a helical segment. At 236–261 (ANCFWRIYAEAKTSGIWGQGYSRARG) the chain is on the cytoplasmic side. The helical transmembrane segment at 262–282 (TLLIHSVLITLYVSTGVVFSL) threads the bilayer. Topologically, residues 283–299 (DMVLTRYHHIDSGTHTW) are extracellular. Residues 300–322 (LLAANSEVLMMLPRAMLTYLYLL) traverse the membrane as a helical segment. Residues 323-347 (RYRQLLGMVRGHLPSRRHQAIFTIS) lie on the Cytoplasmic side of the membrane.

Belongs to the G-protein coupled receptor 1 family. In terms of tissue distribution, expression restricted to nervous system and testis. Is also detected in several tumors types, most notably prostate cancer.

Its subcellular location is the cell membrane. Its function is as follows. Orphan receptor. The polypeptide is Probable G-protein coupled receptor 148 (GPR148) (Homo sapiens (Human)).